A 358-amino-acid polypeptide reads, in one-letter code: Ubiquitin thioesterase OTU1 (358 aa).

Positions 5 to 87 (FSVKLKSKKG…LIVEEKAGAA (83 aa)) constitute a Ubiquitin-like domain. The tract at residues 8–94 (KLKSKKGQFI…GAAGPTSTPL (87 aa)) is UBX-like. Residues 83–108 (KAGAAGPTSTPLASGSGSSTMEDDEA) form a disordered region. The segment covering 89–102 (PTSTPLASGSGSST) has biased composition (polar residues). The region spanning 161-285 (LLKKVVPADN…GIHYDPLYME (125 aa)) is the OTU domain. A cys-loop region spans residues 166 to 172 (VPADNSC). Residue aspartate 169 is part of the active site. The active-site Nucleophile is the cysteine 172. Positions 224-234 (IQKADSWGGAI) are variable-loop. The segment at 274 to 278 (FDGIH) is his-loop. Substrate is bound at residue isoleucine 277. Histidine 278 is a catalytic residue. Residues 301-306 (MGVYQQ) are S2 site. The segment at 328–352 (LRCMDCDVMLVGQGQAQEHAKKTGH) adopts a C2H2-type zinc-finger fold. Histidine 352 is a catalytic residue.

The catalysed reaction is Thiol-dependent hydrolysis of ester, thioester, amide, peptide and isopeptide bonds formed by the C-terminal Gly of ubiquitin (a 76-residue protein attached to proteins as an intracellular targeting signal).. In terms of biological role, hydrolase that can remove conjugated ubiquitin from proteins and may therefore play an important regulatory role at the level of protein turnover by preventing degradation. This is Ubiquitin thioesterase OTU1 from Drosophila pseudoobscura pseudoobscura (Fruit fly).